Consider the following 51-residue polypeptide: Mitochondrial import receptor subunit TOM5 homolog (51 aa).

Met1 carries the N-acetylmethionine modification. Lys10 is covalently cross-linked (Glycyl lysine isopeptide (Lys-Gly) (interchain with G-Cter in SUMO2)). The chain crosses the membrane as a helical span at residues 27-45; it reads SIRNFLIYVALLRVTPFIL.

Belongs to the Tom5 family. Forms part of the preprotein translocase complex of the outer mitochondrial membrane (TOM complex) which consists of at least 7 different proteins (TOMM5, TOMM6, TOMM7, TOMM20, TOMM22, TOMM40 and TOMM70).

It is found in the mitochondrion outer membrane. This Bos taurus (Bovine) protein is Mitochondrial import receptor subunit TOM5 homolog.